The primary structure comprises 322 residues: MNKPKIFIDGEAGTTGLQIYSRLNERDDIELVSIAASKRKDADERAKLLNSVDVAILCLPDDAAREAVSLVHSSQVKILDASTAYRTAQGWVYGFPELNPGQREKIANAQFVSNPGCYPTGFLACVRPLIAQGILPSSFPITINAVSGYSGGGKSLIQKYDSFHEQQKGATSDYPFGIYGLQFGHKHVKEMHQHSGLASPPLFIPAVGDFEQGMLVQIPLPLWTLDNPPSGEEIHQAIAQYYQGEKFVQVASFKDPSLLRDGTFLDATAVNGTNIVQVFVFANDNTKEALLVARLDNLGKGASGAAVQNLNIMLGLPEELGL.

Residue C117 is part of the active site.

Belongs to the NAGSA dehydrogenase family. Type 2 subfamily.

It is found in the cytoplasm. The enzyme catalyses N-acetyl-L-glutamate 5-semialdehyde + phosphate + NADP(+) = N-acetyl-L-glutamyl 5-phosphate + NADPH + H(+). It functions in the pathway amino-acid biosynthesis; L-arginine biosynthesis; N(2)-acetyl-L-ornithine from L-glutamate: step 3/4. Its function is as follows. Catalyzes the NADPH-dependent reduction of N-acetyl-5-glutamyl phosphate to yield N-acetyl-L-glutamate 5-semialdehyde. In Trichormus variabilis (strain ATCC 29413 / PCC 7937) (Anabaena variabilis), this protein is N-acetyl-gamma-glutamyl-phosphate reductase.